We begin with the raw amino-acid sequence, 212 residues long: Large ribosomal subunit protein uL1 (212 aa).

The protein belongs to the universal ribosomal protein uL1 family. As to quaternary structure, part of the 50S ribosomal subunit.

In terms of biological role, binds directly to 23S rRNA. Probably involved in E site tRNA release. Protein L1 is also a translational repressor protein, it controls the translation of its operon by binding to its mRNA. In Methanothermobacter thermautotrophicus (strain ATCC 29096 / DSM 1053 / JCM 10044 / NBRC 100330 / Delta H) (Methanobacterium thermoautotrophicum), this protein is Large ribosomal subunit protein uL1.